A 205-amino-acid polypeptide reads, in one-letter code: Adenylyl-sulfate kinase (205 aa).

Position 31–38 (31–38) interacts with ATP; sequence GLSGAGKS. S105 functions as the Phosphoserine intermediate in the catalytic mechanism.

It belongs to the APS kinase family.

It carries out the reaction adenosine 5'-phosphosulfate + ATP = 3'-phosphoadenylyl sulfate + ADP + H(+). It participates in sulfur metabolism; hydrogen sulfide biosynthesis; sulfite from sulfate: step 2/3. Its function is as follows. Catalyzes the synthesis of activated sulfate. In Shewanella denitrificans (strain OS217 / ATCC BAA-1090 / DSM 15013), this protein is Adenylyl-sulfate kinase.